Reading from the N-terminus, the 1140-residue chain is MKRLQYRFLLFGFALGSFGWFVASSAFTSVVKSNNETLSSDGGVHMRYLKGKGDVLSILKSKSPAITQRFDLKWNNGKKTEVYLNNVNNYISESLYAQEALKQIERTAQLSIQNGELPDVKVYTNSGASFGLVGWHTDNGRTWAFRHENKYDKNVHFSWNQTYYKYSNRERTASNPYYWKWVAWFDLGYANQRIGLVENDEYHIDKRVPEPTPRKWDKNKPLWGDIRSKILYSAERLDPDKGIFIWFNQTGFNTKGTKGWANSGFFTDFWDTNNNPNAFTTNITSEGGNSNWHSPDWGSHTTDTRFFLKLEPYSKLFYKENGQERSITVSDYIRKAKSTKTNYQWVNKNQIKTLVRKTRSIDLGLGSAVRQTYTTKSDIASNQQLKYKLKDSTFSIDTYNNFKLDKLLVPKTNEDATAIKNGVFVKQPTLSFDFNPVLTNAIVNIHNLFAQTLDLKEHLKSDQPYNESDKAAINKVIEQIKNKEVDYIQVADFIGKLKNWSQNPGSIESKGENTAQWYADAKREFGLNLNDDVNTWTQLSSLIASYFSKDIFANVKLNGAKERRMKVWDGAKFEFIPIENTEKQSEQLANENRAEIAVSAIGFQDEGGLRDASFINKVALTPKSSKTKIANGDASKIEKAANEISYKYHYRQNFKQASWDKQNSQTKSIVVQSTDLNDERERFQKDINNYLKVQGISETEIKVNAVHKVDAMLNARKSDDPKLASVQSTANKYGLNLRSNPYTGQFYVVVDVTNANDLGNQRRANNAKSYFYYIEGLDKGAQSSYLVRFENKQKLYSLESLAVDSRGLYVKNVSKDAIIQAKQNQNLYLDTHNWNAALKANLTNAELTLPTASADNSAKLSTPNAENDEGFLSENVSGSILGYVERMTGKKLFLKERVSFNKEDKNNLKLRLTSNFTLDKKGNLEVKDPSVINQIVEEAKGYNVLVSEEKGDDPESDKNIFKITLTTNPEQSTVIKLPYWIVTKKSKTNKDGTVREQKNLVFDFSNLNNFEYNTVVSLLFTDSSFIKNAYAPLQTEFRKQLKTVLEHKYQAPIKTGQLPLLTKVQLANNQKQIDNFTFDLHKNIFNKEDINKINWPLIAITFTGSAALLSTIIASGVVLHRWRKSRKHFWEQMLKARKVK.

Helical transmembrane passes span 8-28 and 1098-1118; these read FLLF…SAFT and IAIT…SGVV.

This sequence to M.pneumoniae MPN_375 (in the N-terminal section), M.pneumoniae MPN_374 (in the central section) and M.pneumoniae MPN_373 (in the C-terminal section).

The protein localises to the cell membrane. This is an uncharacterized protein from Mycoplasma pneumoniae (strain ATCC 29342 / M129 / Subtype 1) (Mycoplasmoides pneumoniae).